Consider the following 367-residue polypeptide: Queuine tRNA-ribosyltransferase (367 aa).

Asp-89 functions as the Proton acceptor in the catalytic mechanism. Residues 89-93 (DSGGF), Asp-143, Gln-187, and Gly-214 contribute to the substrate site. Residues 245-251 (GVGTPAD) are RNA binding. Asp-264 acts as the Nucleophile in catalysis. The RNA binding; important for wobble base 34 recognition stretch occupies residues 269-273 (TRNAR). 4 residues coordinate Zn(2+): Cys-302, Cys-304, Cys-307, and His-333.

Belongs to the queuine tRNA-ribosyltransferase family. In terms of assembly, homodimer. Within each dimer, one monomer is responsible for RNA recognition and catalysis, while the other monomer binds to the replacement base PreQ1. Zn(2+) serves as cofactor.

The enzyme catalyses 7-aminomethyl-7-carbaguanine + guanosine(34) in tRNA = 7-aminomethyl-7-carbaguanosine(34) in tRNA + guanine. It functions in the pathway tRNA modification; tRNA-queuosine biosynthesis. Functionally, catalyzes the base-exchange of a guanine (G) residue with the queuine precursor 7-aminomethyl-7-deazaguanine (PreQ1) at position 34 (anticodon wobble position) in tRNAs with GU(N) anticodons (tRNA-Asp, -Asn, -His and -Tyr). Catalysis occurs through a double-displacement mechanism. The nucleophile active site attacks the C1' of nucleotide 34 to detach the guanine base from the RNA, forming a covalent enzyme-RNA intermediate. The proton acceptor active site deprotonates the incoming PreQ1, allowing a nucleophilic attack on the C1' of the ribose to form the product. After dissociation, two additional enzymatic reactions on the tRNA convert PreQ1 to queuine (Q), resulting in the hypermodified nucleoside queuosine (7-(((4,5-cis-dihydroxy-2-cyclopenten-1-yl)amino)methyl)-7-deazaguanosine). The polypeptide is Queuine tRNA-ribosyltransferase (Nitrosospira multiformis (strain ATCC 25196 / NCIMB 11849 / C 71)).